We begin with the raw amino-acid sequence, 109 residues long: Cell division protein ZapA (109 aa).

Residues 22 to 99 are a coiled coil; that stretch reads EQQDALNLAA…IEQALLEQGR (78 aa).

It belongs to the ZapA family. Type 1 subfamily. In terms of assembly, homodimer. Interacts with FtsZ.

Its subcellular location is the cytoplasm. Its function is as follows. Activator of cell division through the inhibition of FtsZ GTPase activity, therefore promoting FtsZ assembly into bundles of protofilaments necessary for the formation of the division Z ring. It is recruited early at mid-cell but it is not essential for cell division. The sequence is that of Cell division protein ZapA from Erwinia tasmaniensis (strain DSM 17950 / CFBP 7177 / CIP 109463 / NCPPB 4357 / Et1/99).